We begin with the raw amino-acid sequence, 318 residues long: Transcription factor zip-4 (318 aa).

Polar residues predominate over residues 1–13 (MYNYNYSRGNKSM). Disordered regions lie at residues 1–20 (MYNY…PRFH), 147–205 (EKKP…TAAA), 238–257 (NNDA…LQKD), and 273–318 (ELQS…KSNY). Residues 173 to 190 (DYQEEGETSLSDNDESVD) are compositionally biased toward acidic residues. Residues 228–291 (EPIYKLKRAR…ERDQQLIKQL (64 aa)) enclose the bZIP domain. Residues 232–266 (KLKRARNNDAVRKSRNKAKELQLQKDEEYDEMKKR) form a basic motif region. A coiled-coil region spans residues 242 to 280 (VRKSRNKAKELQLQKDEEYDEMKKRITQLEAELQSEREG). Positions 267 to 274 (ITQLEAEL) are leucine-zipper. A compositionally biased stretch (basic and acidic residues) spans 275-298 (QSEREGRERDQQLIKQLIREKEST). Residues 307–318 (RNALESFNKSNY) are compositionally biased toward polar residues.

It belongs to the bZIP family. C/EBP subfamily.

Its subcellular location is the nucleus. Transcription factor that binds to the promoter and the enhancer regions of target genes. Involved in responding to mitochondrial damage. Has a protective role in response to infection by the Gram-negative bacterium P.aeruginosa. The polypeptide is Transcription factor zip-4 (Caenorhabditis elegans).